Consider the following 142-residue polypeptide: Small ribosomal subunit protein uS12 (142 aa).

Belongs to the universal ribosomal protein uS12 family. As to quaternary structure, part of the 30S ribosomal subunit.

In terms of biological role, with S4 and S5 plays an important role in translational accuracy. Located at the interface of the 30S and 50S subunits. In Methanosarcina barkeri (strain Fusaro / DSM 804), this protein is Small ribosomal subunit protein uS12.